A 319-amino-acid polypeptide reads, in one-letter code: Inositol-tetrakisphosphate 1-kinase (319 aa).

Lysine 17 and lysine 57 together coordinate 1D-myo-inositol 1,3,4,6-tetrakisphosphate. Lysine 17 is a binding site for 1D-myo-inositol 1,3,4-trisphosphate. 2 residues coordinate ADP: arginine 94 and lysine 136. The ATP site is built by arginine 94 and lysine 136. In terms of domain architecture, ATP-grasp spans 98–317 (NALLIKNNIP…KVALCYTEVA (220 aa)). Glutamine 141, glycine 142, and histidine 147 together coordinate 1D-myo-inositol 1,3,4,6-tetrakisphosphate. Residues glutamine 141, glycine 142, and histidine 147 each coordinate 1D-myo-inositol 1,3,4-trisphosphate. Histidine 147, glutamine 168, histidine 169, tyrosine 170, and isoleucine 171 together coordinate ADP. The ATP site is built by histidine 147, glutamine 168, histidine 169, tyrosine 170, and isoleucine 171. Residue lysine 179 coordinates 1D-myo-inositol 1,3,4,6-tetrakisphosphate. 2 residues coordinate ADP: serine 194 and asparagine 210. Residue serine 194 participates in ATP binding. Aspartate 275 serves as a coordination point for Mg(2+). ADP contacts are provided by valine 288 and aspartate 289. 3 residues coordinate ATP: valine 288, aspartate 289, and asparagine 291. Aspartate 289, asparagine 291, and serine 295 together coordinate 1D-myo-inositol 1,3,4,6-tetrakisphosphate. Mg(2+) contacts are provided by aspartate 289 and asparagine 291. The 1D-myo-inositol 1,3,4-trisphosphate site is built by asparagine 291 and serine 295.

It belongs to the ITPK1 family. Monomer. Mg(2+) is required as a cofactor.

The enzyme catalyses 1D-myo-inositol 3,4,5,6-tetrakisphosphate + ATP = 1D-myo-inositol 1,3,4,5,6-pentakisphosphate + ADP + H(+). The catalysed reaction is 1D-myo-inositol 1,3,4-trisphosphate + ATP = 1D-myo-inositol 1,3,4,5-tetrakisphosphate + ADP + H(+). It carries out the reaction 1D-myo-inositol 1,3,4-trisphosphate + ATP = 1D-myo-inositol 1,3,4,6-tetrakisphosphate + ADP + H(+). Its function is as follows. Kinase that can phosphorylate various inositol polyphosphate such as Ins(3,4,5,6)P4 or Ins(1,3,4)P3. Phosphorylates Ins(3,4,5,6)P4 at position 1 to form Ins(1,3,4,5,6)P5. This reaction is thought to have regulatory importance, since Ins(3,4,5,6)P4 is an inhibitor of plasma membrane Ca(2+)-activated Cl(-) channels, while Ins(1,3,4,5,6)P5 is not. Also phosphorylates Ins(1,3,4)P3 on O-5 and O-6 to form Ins(1,3,4,6)P4, an essential molecule in the hexakisphosphate (InsP6) pathway. May also act as an isomerase that interconverts the inositol tetrakisphosphate isomers Ins(1,3,4,5)P4 and Ins(1,3,4,6)P4 in the presence of ADP and magnesium. The chain is Inositol-tetrakisphosphate 1-kinase (ITPK1) from Entamoeba histolytica (strain ATCC 30459 / HM-1:IMSS / ABRM).